The following is a 309-amino-acid chain: Aspartate carbamoyltransferase catalytic subunit (309 aa).

2 residues coordinate carbamoyl phosphate: arginine 55 and threonine 56. Lysine 85 provides a ligand contact to L-aspartate. Residues arginine 106, histidine 135, and glutamine 138 each contribute to the carbamoyl phosphate site. L-aspartate contacts are provided by arginine 168 and arginine 230. Residues leucine 268 and proline 269 each coordinate carbamoyl phosphate.

This sequence belongs to the aspartate/ornithine carbamoyltransferase superfamily. ATCase family. As to quaternary structure, heterododecamer (2C3:3R2) of six catalytic PyrB chains organized as two trimers (C3), and six regulatory PyrI chains organized as three dimers (R2).

It catalyses the reaction carbamoyl phosphate + L-aspartate = N-carbamoyl-L-aspartate + phosphate + H(+). The protein operates within pyrimidine metabolism; UMP biosynthesis via de novo pathway; (S)-dihydroorotate from bicarbonate: step 2/3. In terms of biological role, catalyzes the condensation of carbamoyl phosphate and aspartate to form carbamoyl aspartate and inorganic phosphate, the committed step in the de novo pyrimidine nucleotide biosynthesis pathway. The chain is Aspartate carbamoyltransferase catalytic subunit from Vibrio cholerae serotype O1 (strain ATCC 39315 / El Tor Inaba N16961).